The primary structure comprises 177 residues: MAKRWYVVHAYSGYEKHVMRSLIERVKLAGMEEEFGEILVPTEEVVEMRNGQKRKSERKFFPGYVLVQMEMNEGTWHLVKDTPRVMGFIGGTADKPAPITDREADAILRRVADSGDKPKPKTLFEPGETVRVIDGPFADFNGVVEEVNYEKSRIQVAVLIFGRSTPVELEFSQVEKV.

The KOW domain maps to 126–156 (PGETVRVIDGPFADFNGVVEEVNYEKSRIQV).

Belongs to the NusG family.

Participates in transcription elongation, termination and antitermination. The protein is Transcription termination/antitermination protein NusG of Pseudomonas aeruginosa (strain ATCC 15692 / DSM 22644 / CIP 104116 / JCM 14847 / LMG 12228 / 1C / PRS 101 / PAO1).